The following is a 288-amino-acid chain: Energy-coupling factor transporter ATP-binding protein EcfA2 (288 aa).

Positions Ile-3 to Ser-246 constitute an ABC transporter domain. An ATP-binding site is contributed by Gly-40 to Ser-47.

It belongs to the ABC transporter superfamily. Energy-coupling factor EcfA family. In terms of assembly, forms a stable energy-coupling factor (ECF) transporter complex composed of 2 membrane-embedded substrate-binding proteins (S component), 2 ATP-binding proteins (A component) and 2 transmembrane proteins (T component).

The protein resides in the cell membrane. ATP-binding (A) component of a common energy-coupling factor (ECF) ABC-transporter complex. Unlike classic ABC transporters this ECF transporter provides the energy necessary to transport a number of different substrates. This is Energy-coupling factor transporter ATP-binding protein EcfA2 from Listeria monocytogenes serovar 1/2a (strain ATCC BAA-679 / EGD-e).